Reading from the N-terminus, the 591-residue chain is Aspartate--tRNA(Asp/Asn) ligase (591 aa).

Glutamate 174 provides a ligand contact to L-aspartate. Residues 198 to 201 (QLFK) are aspartate. Arginine 220 serves as a coordination point for L-aspartate. ATP contacts are provided by residues 220-222 (RDE) and glutamine 229. Histidine 450 serves as a coordination point for L-aspartate. Glutamate 483 is a binding site for ATP. L-aspartate is bound at residue arginine 490. 535–538 (GLDR) provides a ligand contact to ATP.

Belongs to the class-II aminoacyl-tRNA synthetase family. Type 1 subfamily. Homodimer.

It is found in the cytoplasm. It catalyses the reaction tRNA(Asx) + L-aspartate + ATP = L-aspartyl-tRNA(Asx) + AMP + diphosphate. Functionally, aspartyl-tRNA synthetase with relaxed tRNA specificity since it is able to aspartylate not only its cognate tRNA(Asp) but also tRNA(Asn). Reaction proceeds in two steps: L-aspartate is first activated by ATP to form Asp-AMP and then transferred to the acceptor end of tRNA(Asp/Asn). This chain is Aspartate--tRNA(Asp/Asn) ligase, found in Pseudomonas fluorescens (strain Pf0-1).